The following is a 170-amino-acid chain: MSVAGGEIRGDTGGEDTAAPGRFSFSPEPTLEDIRRLHAEFAAERDWEQFHQPRNLLLALVGEVGELAELFQWKTDGEPGPQGWSPRERAALQEELSDVLIYLVALAARCRVDLPLAVLSKMDINRRRYPAHLARSSSRKYTELPHGAISEDQAVGPADIPCDSTGQTST.

The tract at residues 1–27 is disordered; it reads MSVAGGEIRGDTGGEDTAAPGRFSFSP. The residue at position 2 (serine 2) is an N-acetylserine. Position 2 is a phosphoserine (serine 2). At threonine 12 the chain carries Phosphothreonine. Residues histidine 38 and 47–51 contribute to the substrate site; that span reads WEQFH. Mg(2+) contacts are provided by glutamate 63 and glutamate 66. Substrate is bound at residue tryptophan 73. Serine 85 carries the post-translational modification Phosphoserine. Residues glutamate 95 and aspartate 98 each contribute to the Mg(2+) site. Residue tyrosine 102 coordinates substrate. Positions 147-170 are disordered; the sequence is GAISEDQAVGPADIPCDSTGQTST.

In terms of assembly, homotetramer. Requires Mg(2+) as cofactor.

It localises to the mitochondrion. The protein localises to the nucleus. It is found in the cytoplasm. Its subcellular location is the cytosol. It catalyses the reaction dCTP + H2O = dCMP + diphosphate + H(+). With respect to regulation, inhibited by the reaction end product PPi. Inhibited by dCDP. Inhibited by triptolide. Functionally, hydrolyzes deoxynucleoside triphosphates (dNTPs) to the corresponding nucleoside monophosphates. Has a strong preference for dCTP and its analogs including 5-iodo-dCTP and 5-methyl-dCTP for which it may even have a higher efficiency. May protect DNA or RNA against the incorporation of these genotoxic nucleotide analogs through their catabolism. The sequence is that of dCTP pyrophosphatase 1 from Homo sapiens (Human).